Reading from the N-terminus, the 185-residue chain is Ribosome-recycling factor (185 aa).

The protein belongs to the RRF family.

The protein localises to the cytoplasm. In terms of biological role, responsible for the release of ribosomes from messenger RNA at the termination of protein biosynthesis. May increase the efficiency of translation by recycling ribosomes from one round of translation to another. The protein is Ribosome-recycling factor of Lacticaseibacillus casei (strain BL23) (Lactobacillus casei).